A 426-amino-acid polypeptide reads, in one-letter code: Glutamate-1-semialdehyde 2,1-aminomutase (426 aa).

Lys265 bears the N6-(pyridoxal phosphate)lysine mark.

Belongs to the class-III pyridoxal-phosphate-dependent aminotransferase family. HemL subfamily. Homodimer. The cofactor is pyridoxal 5'-phosphate.

It is found in the cytoplasm. It catalyses the reaction (S)-4-amino-5-oxopentanoate = 5-aminolevulinate. It functions in the pathway porphyrin-containing compound metabolism; protoporphyrin-IX biosynthesis; 5-aminolevulinate from L-glutamyl-tRNA(Glu): step 2/2. This is Glutamate-1-semialdehyde 2,1-aminomutase from Klebsiella pneumoniae subsp. pneumoniae (strain ATCC 700721 / MGH 78578).